Here is a 159-residue protein sequence, read N- to C-terminus: Cytochrome b6-f complex subunit 4 (159 aa).

3 helical membrane-spanning segments follow: residues leucine 36–valine 56, leucine 95–glutamate 115, and threonine 131–isoleucine 151.

It belongs to the cytochrome b family. PetD subfamily. The 4 large subunits of the cytochrome b6-f complex are cytochrome b6, subunit IV (17 kDa polypeptide, petD), cytochrome f and the Rieske protein, while the 4 small subunits are petG, petL, petM and petN. The complex functions as a dimer.

Its subcellular location is the plastid. It localises to the chloroplast thylakoid membrane. In terms of biological role, component of the cytochrome b6-f complex, which mediates electron transfer between photosystem II (PSII) and photosystem I (PSI), cyclic electron flow around PSI, and state transitions. The sequence is that of Cytochrome b6-f complex subunit 4 from Piper cenocladum (Ant piper).